Reading from the N-terminus, the 481-residue chain is Subtilisin-like protease 1 (481 aa).

The first 19 residues, 1 to 19, serve as a signal peptide directing secretion; it reads MGVFRFISISLAAVSAANA. The propeptide occupies 20-116; it reads AQILSMPHAQ…VEPDTIISVH (97 aa). One can recognise an Inhibitor I9 domain in the interval 34–115; sequence SYIVMMKDDT…FVEPDTIISV (82 aa). Residues 126–400 form the Peptidase S8 domain; sequence SWGLARISSS…NVLINNGGAK (275 aa). Active-site charge relay system residues include D158 and H190. Positions 175–198 are disordered; it reads GSNQVNDGDDNDRSGHGTHTSGTM. Residue N251 is glycosylated (N-linked (GlcNAc...) asparagine). Residues 281–312 form a disordered region; the sequence is GNDNTDARSSSPASEPSVCTVGASAEDDSRSS. Polar residues predominate over residues 282–294; it reads NDNTDARSSSPAS. Catalysis depends on S345, which acts as the Charge relay system. A disordered region spans residues 379–455; that stretch reads ASISDVGPGT…HPHTPFPGGD (77 aa). The span at 424-450 shows a compositional bias: pro residues; the sequence is PQQPAPGEPSTPAPAPMPPTPQHPHTP.

It belongs to the peptidase S8 family.

The protein localises to the secreted. Secreted subtilisin-like serine protease with keratinolytic activity that contributes to pathogenicity. In Arthroderma gypseum (strain ATCC MYA-4604 / CBS 118893) (Microsporum gypseum), this protein is Subtilisin-like protease 1 (SUB1).